The following is a 146-amino-acid chain: Putative pre-16S rRNA nuclease (146 aa).

It belongs to the YqgF nuclease family.

The protein localises to the cytoplasm. Functionally, could be a nuclease involved in processing of the 5'-end of pre-16S rRNA. This chain is Putative pre-16S rRNA nuclease, found in Burkholderia thailandensis (strain ATCC 700388 / DSM 13276 / CCUG 48851 / CIP 106301 / E264).